The sequence spans 413 residues: Imidazolonepropionase (413 aa).

Positions 79 and 81 each coordinate Fe(3+). Zn(2+) contacts are provided by His-79 and His-81. 4-imidazolone-5-propanoate-binding residues include Arg-88, Tyr-151, and His-184. Residue Tyr-151 coordinates N-formimidoyl-L-glutamate. Residue His-248 participates in Fe(3+) binding. His-248 lines the Zn(2+) pocket. Glu-251 contacts 4-imidazolone-5-propanoate. Asp-322 contributes to the Fe(3+) binding site. Asp-322 serves as a coordination point for Zn(2+). Residues Asn-324 and Gly-326 each coordinate N-formimidoyl-L-glutamate. Ser-327 lines the 4-imidazolone-5-propanoate pocket.

This sequence belongs to the metallo-dependent hydrolases superfamily. HutI family. The cofactor is Zn(2+). Fe(3+) is required as a cofactor.

Its subcellular location is the cytoplasm. It carries out the reaction 4-imidazolone-5-propanoate + H2O = N-formimidoyl-L-glutamate. It participates in amino-acid degradation; L-histidine degradation into L-glutamate; N-formimidoyl-L-glutamate from L-histidine: step 3/3. In terms of biological role, catalyzes the hydrolytic cleavage of the carbon-nitrogen bond in imidazolone-5-propanoate to yield N-formimidoyl-L-glutamate. It is the third step in the universal histidine degradation pathway. In Fusobacterium nucleatum subsp. nucleatum (strain ATCC 25586 / DSM 15643 / BCRC 10681 / CIP 101130 / JCM 8532 / KCTC 2640 / LMG 13131 / VPI 4355), this protein is Imidazolonepropionase.